We begin with the raw amino-acid sequence, 209 residues long: Ribosomal RNA large subunit methyltransferase E (209 aa).

S-adenosyl-L-methionine-binding residues include G63, W65, D83, D99, and D124. Residue K164 is the Proton acceptor of the active site.

Belongs to the class I-like SAM-binding methyltransferase superfamily. RNA methyltransferase RlmE family.

The protein resides in the cytoplasm. It catalyses the reaction uridine(2552) in 23S rRNA + S-adenosyl-L-methionine = 2'-O-methyluridine(2552) in 23S rRNA + S-adenosyl-L-homocysteine + H(+). In terms of biological role, specifically methylates the uridine in position 2552 of 23S rRNA at the 2'-O position of the ribose in the fully assembled 50S ribosomal subunit. The protein is Ribosomal RNA large subunit methyltransferase E of Shewanella pealeana (strain ATCC 700345 / ANG-SQ1).